A 423-amino-acid chain; its full sequence is Heat shock transcription factor, X-linked (423 aa).

Positions M1–E25 are enriched in basic and acidic residues. Disordered stretches follow at residues M1–S56, K215–Q303, and P397–T423. Residues P98–S282 mediate DNA binding. A Glycyl lysine isopeptide (Lys-Gly) (interchain with G-Cter in SUMO1) cross-link involves residue K215. The span at H243–P254 shows a compositional bias: polar residues.

The protein belongs to the HSF family. As to expression, testis-specific.

Its subcellular location is the nucleus. It is found in the cytoplasm. The protein is Heat shock transcription factor, X-linked (HSFX1) of Homo sapiens (Human).